A 545-amino-acid polypeptide reads, in one-letter code: Phenylalanine--tRNA ligase beta subunit (545 aa).

The B5 domain occupies 266–342 (LSPALRNINV…IGAGFGNLEA (77 aa)). Positions 320, 326, 329, and 330 each coordinate Mg(2+).

The protein belongs to the phenylalanyl-tRNA synthetase beta subunit family. Type 2 subfamily. In terms of assembly, tetramer of two alpha and two beta subunits. It depends on Mg(2+) as a cofactor.

The protein resides in the cytoplasm. The enzyme catalyses tRNA(Phe) + L-phenylalanine + ATP = L-phenylalanyl-tRNA(Phe) + AMP + diphosphate + H(+). This is Phenylalanine--tRNA ligase beta subunit from Methanospirillum hungatei JF-1 (strain ATCC 27890 / DSM 864 / NBRC 100397 / JF-1).